Here is a 493-residue protein sequence, read N- to C-terminus: Transcript termination protein A18 (493 aa).

The region spanning 100–256 is the Helicase ATP-binding domain; the sequence is MIELKRPLYI…NSIINIAKLS (157 aa). 113-120 serves as a coordination point for ATP; that stretch reads LACGFGKT. The short motif at 206–209 is the DESH box element; sequence DESH.

It belongs to the helicase family. Poxviruses subfamily. As to quaternary structure, interacts with G2. Might be part of a transcription complex composed at least of G2, A18, and H5.

Its subcellular location is the virion. In terms of biological role, DNA helicase which seems to act as a postreplicative transcription termination factor. Involved in ATP-dependent release of nascent RNA. Forms a stable complex with single-stranded DNA, and to a lesser extent RNA. The polypeptide is Transcript termination protein A18 (Camelus).